Consider the following 343-residue polypeptide: Fe-S cluster assembly protein DRE2 (343 aa).

The interval 1 to 188 is N-terminal SAM-like domain; the sequence is MTVSRDSLVL…KKLTKKVSAI (188 aa). The tract at residues 189 to 240 is linker; sequence KLTDSDLEDDDDDLESDDSANNSKTKFFDDFDDPETGDSIDEDDLIAETEED. Acidic residues-rich tracts occupy residues 195–206 and 218–228; these read LEDDDDDLESDD and DFDDPETGDSI. Residues 195–228 are disordered; sequence LEDDDDDLESDDSANNSKTKFFDDFDDPETGDSI. The [2Fe-2S] cluster site is built by C247, C258, C261, and C263. The tract at residues 247 to 263 is fe-S binding site A; that stretch reads CGKSKQRRRKACKDCSC. 4 residues coordinate [4Fe-4S] cluster: C306, C309, C317, and C320. 2 consecutive short sequence motifs (cx2C motif) follow at residues 306-309 and 317-320; these read CGSC and CSGC. The fe-S binding site B stretch occupies residues 306 to 320; the sequence is CGSCALGDAFRCSGC.

This sequence belongs to the anamorsin family. As to quaternary structure, monomer. Interacts with TAH18. Interacts with MIA40. It depends on [2Fe-2S] cluster as a cofactor. Requires [4Fe-4S] cluster as cofactor.

Its subcellular location is the cytoplasm. The protein localises to the mitochondrion intermembrane space. In terms of biological role, component of the cytosolic iron-sulfur (Fe-S) protein assembly (CIA) machinery required for the maturation of extramitochondrial Fe-S proteins. Part of an electron transfer chain functioning in an early step of cytosolic Fe-S biogenesis, facilitating the de novo assembly of a [4Fe-4S] cluster on the scaffold complex CFD1-NBP35. Electrons are transferred to DRE2 from NADPH via the FAD- and FMN-containing protein TAH18. TAH18-DRE2 are also required for the assembly of the diferric tyrosyl radical cofactor of ribonucleotide reductase (RNR), probably by providing electrons for reduction during radical cofactor maturation in the catalytic small subunit RNR2. The sequence is that of Fe-S cluster assembly protein DRE2 from Kluyveromyces lactis (strain ATCC 8585 / CBS 2359 / DSM 70799 / NBRC 1267 / NRRL Y-1140 / WM37) (Yeast).